The chain runs to 185 residues: Tetratricopeptide repeat protein 36 homolog (185 aa).

3 TPR repeats span residues 53–86 (SRELELQGVLLTEKGSFDEALKVFQLALNQAQRA), 88–119 (VLNNRAQTLRLAKRDGEALDDLNKALEMASDQ), and 125–158 (CHAHCQRGVLYRKLDNLDAARSDFEAAAQLGSKF).

The protein belongs to the TTC36 family.

This is Tetratricopeptide repeat protein 36 homolog from Drosophila pseudoobscura pseudoobscura (Fruit fly).